We begin with the raw amino-acid sequence, 494 residues long: 4-trimethylaminobutyraldehyde dehydrogenase (494 aa).

At serine 2 the chain carries N-acetylserine. The residue at position 30 (lysine 30) is an N6-acetyllysine; alternate. Lysine 30 carries the post-translational modification N6-succinyllysine; alternate. Lysine 59 carries the post-translational modification N6-succinyllysine. Residues lysine 180 and 232-236 (GSVPT) contribute to the NAD(+) site. Glutamate 254 serves as the catalytic Proton acceptor. The active-site Nucleophile is the cysteine 288. N6-acetyllysine is present on lysine 298. Lysine 303 bears the N6-acetyllysine; alternate mark. Lysine 303 carries the N6-succinyllysine; alternate modification. The residue at position 344 (lysine 344) is an N6-acetyllysine. Glutamate 391 lines the NAD(+) pocket.

Belongs to the aldehyde dehydrogenase family. As to quaternary structure, homotetramer.

The protein resides in the cytoplasm. It is found in the cytosol. It carries out the reaction 4-(trimethylamino)butanal + NAD(+) + H2O = 4-(trimethylamino)butanoate + NADH + 2 H(+). The catalysed reaction is an aldehyde + NAD(+) + H2O = a carboxylate + NADH + 2 H(+). It catalyses the reaction 4-aminobutanal + NAD(+) + H2O = 4-aminobutanoate + NADH + 2 H(+). The enzyme catalyses formaldehyde + NAD(+) + H2O = formate + NADH + 2 H(+). It carries out the reaction acetaldehyde + NAD(+) + H2O = acetate + NADH + 2 H(+). The catalysed reaction is imidazole-4-acetaldehyde + NAD(+) + H2O = imidazole-4-acetate + NADH + 2 H(+). It catalyses the reaction acrolein + NAD(+) + H2O = acrylate + NADH + 2 H(+). The enzyme catalyses (5-hydroxyindol-3-yl)acetaldehyde + NAD(+) + H2O = (5-hydroxyindol-3-yl)acetate + NADH + 2 H(+). It carries out the reaction 3,4-dihydroxyphenylacetaldehyde + NAD(+) + H2O = 3,4-dihydroxyphenylacetate + NADH + 2 H(+). The catalysed reaction is spermine monoaldehyde + NAD(+) + H2O = N-(2-carboxyethyl)spermidine + NADH + 2 H(+). It catalyses the reaction propanal + NAD(+) + H2O = propanoate + NADH + 2 H(+). The enzyme catalyses butanal + NAD(+) + H2O = butanoate + NADH + 2 H(+). It carries out the reaction pentanal + NAD(+) + H2O = pentanoate + NADH + 2 H(+). The catalysed reaction is hexanal + NAD(+) + H2O = hexanoate + NADH + 2 H(+). It participates in amine and polyamine biosynthesis; carnitine biosynthesis. Its function is as follows. Converts gamma-trimethylaminobutyraldehyde into gamma-butyrobetaine with high efficiency (in vitro). Can catalyze the irreversible oxidation of a broad range of aldehydes to the corresponding acids in an NAD-dependent reaction, but with low efficiency. Catalyzes the oxidation of aldehydes arising from biogenic amines and polyamines. The polypeptide is 4-trimethylaminobutyraldehyde dehydrogenase (Mus musculus (Mouse)).